Reading from the N-terminus, the 892-residue chain is Ice-binding protein 1 (892 aa).

A signal peptide spans 1–23 (MNHSIKKTYLVFTMLLGFILLAG). The N-palmitoyl cysteine moiety is linked to residue Cys-24. Cys-24 carries the S-diacylglycerol cysteine lipid modification. BIG2 domains follow at residues 43-111 (TSIA…ITAS), 134-205 (TALA…SLGS), 221-288 (SIAL…ITAD), 306-386 (TSIM…TVTV), 392-471 (TSIA…TNLT), 478-558 (NSIV…NLTV), and 565-638 (SIDV…QASL). The short motif at 866–869 (TGAN) is the Ice-binding site motif (T-A/G-X-T/N) element.

It belongs to the ice-binding protein family.

It localises to the cell outer membrane. Its function is as follows. Ice-binding adhesion protein that adsorbs this bacterium onto ice to maintain a favorable position in its aquatic habitat. Inhibits growth of the ice crystals. Has high thermal hysteresis (TH) activity, which is the ability to lower the freezing point of an aqueous solution below its melting point. The TH activity of this protein is approximately 1.4 degrees Celsius at 25 uM and little below 2 degrees Celsius at 80 uM. This Shewanella frigidimarina (strain NCIMB 400) protein is Ice-binding protein 1.